The chain runs to 813 residues: Leucine--tRNA ligase (813 aa).

The 'HIGH' region motif lies at 42 to 52 (PYTSGNLHIGH). The 'KMSKS' region motif lies at 580-584 (KMSKS). Lys583 contributes to the ATP binding site.

Belongs to the class-I aminoacyl-tRNA synthetase family.

It localises to the cytoplasm. The enzyme catalyses tRNA(Leu) + L-leucine + ATP = L-leucyl-tRNA(Leu) + AMP + diphosphate. This is Leucine--tRNA ligase from Dehalococcoides mccartyi (strain ATCC BAA-2266 / KCTC 15142 / 195) (Dehalococcoides ethenogenes (strain 195)).